The primary structure comprises 313 residues: Protein FixB (313 aa).

255 to 283 (LYLAVGISGQIQHMVGANASQTIFAINKD) contributes to the FAD binding site.

The protein belongs to the ETF alpha-subunit/FixB family. In terms of assembly, heterodimer of FixA and FixB.

It participates in amine and polyamine metabolism; carnitine metabolism. Required for anaerobic carnitine reduction. May bring reductant to CaiA. The protein is Protein FixB of Escherichia coli O81 (strain ED1a).